Reading from the N-terminus, the 439-residue chain is MKGWLQQHKPTARRSLSRHLIGVSVLALALVAGVGGWAATTELSSAIVAGGVVIVDDNVKKVQHLTGGIVGELLVKEGDRVEAGQVLIRLDGTTVRANLAIIESTLAQFYARRARLQAERMGAASFEIEEDLAEFIPGTAAAKLIEGEQRLFASRRSALSGMKGQLDSRKAQLADEVEGLTVQLNAIEEALKLIAEELTGVDSLFGQGLVPMQRVTTLKRQRAELEGGRGRHIAARAQARGKSSEIDLQILQLDEDRRSEISKELTDVEAKIAEYEERRTAATDQLRRLDITAPLSGRIYQLAIHTVNGVINPGETLMLVVPEAEDLTVEAKVATHDIDQIRVGQSVEIRFSAFNQRTTPEVEAEVVTVAPDLVTDERTGASYYPLRIRPKAESLAKLKGLSLYPGMPAEVFIKIADRTVISYLTKPLTDQMRHAFRED.

The chain crosses the membrane as a helical span at residues 20 to 40; sequence LIGVSVLALALVAGVGGWAAT.

Belongs to the membrane fusion protein (MFP) (TC 8.A.1) family. In terms of assembly, part of a type I secretion system composed of PrsD and PrsE.

The protein resides in the cell inner membrane. Functionally, mediates secretion of glycanase ExsH. This is Type I secretion system membrane fusion protein PrsE (prsE) from Rhizobium meliloti (strain 1021) (Ensifer meliloti).